We begin with the raw amino-acid sequence, 580 residues long: Dihydroxy-acid dehydratase (580 aa).

Asp95 is a binding site for Mg(2+). Cys136 lines the [2Fe-2S] cluster pocket. Mg(2+)-binding residues include Asp137 and Lys138. Residue Lys138 is modified to N6-carboxylysine. Cys209 contacts [2Fe-2S] cluster. Glu462 contacts Mg(2+). The Proton acceptor role is filled by Ser488.

The protein belongs to the IlvD/Edd family. As to quaternary structure, homodimer. The cofactor is [2Fe-2S] cluster. Mg(2+) serves as cofactor.

The enzyme catalyses (2R)-2,3-dihydroxy-3-methylbutanoate = 3-methyl-2-oxobutanoate + H2O. The catalysed reaction is (2R,3R)-2,3-dihydroxy-3-methylpentanoate = (S)-3-methyl-2-oxopentanoate + H2O. It participates in amino-acid biosynthesis; L-isoleucine biosynthesis; L-isoleucine from 2-oxobutanoate: step 3/4. The protein operates within amino-acid biosynthesis; L-valine biosynthesis; L-valine from pyruvate: step 3/4. Its function is as follows. Functions in the biosynthesis of branched-chain amino acids. Catalyzes the dehydration of (2R,3R)-2,3-dihydroxy-3-methylpentanoate (2,3-dihydroxy-3-methylvalerate) into 2-oxo-3-methylpentanoate (2-oxo-3-methylvalerate) and of (2R)-2,3-dihydroxy-3-methylbutanoate (2,3-dihydroxyisovalerate) into 2-oxo-3-methylbutanoate (2-oxoisovalerate), the penultimate precursor to L-isoleucine and L-valine, respectively. In Leuconostoc mesenteroides subsp. mesenteroides (strain ATCC 8293 / DSM 20343 / BCRC 11652 / CCM 1803 / JCM 6124 / NCDO 523 / NBRC 100496 / NCIMB 8023 / NCTC 12954 / NRRL B-1118 / 37Y), this protein is Dihydroxy-acid dehydratase.